The chain runs to 98 residues: Small ribosomal subunit protein uS17 (98 aa).

Belongs to the universal ribosomal protein uS17 family. Part of the 30S ribosomal subunit.

In terms of biological role, one of the primary rRNA binding proteins, it binds specifically to the 5'-end of 16S ribosomal RNA. The chain is Small ribosomal subunit protein uS17 from Leptothrix cholodnii (strain ATCC 51168 / LMG 8142 / SP-6) (Leptothrix discophora (strain SP-6)).